A 931-amino-acid polypeptide reads, in one-letter code: Protein unc-45 homolog B (931 aa).

3 TPR repeats span residues 6–39, 43–76, and 77–110; these read AVQLKEEGNRHFQLQDYKAATNSYSQALKLTKDK, ATLYRNRAACGLKTESYVQAASDASRAIDINSSD, and IKALYRRCQALEHLGKLDQAFKDVQRCATLEPRN. ARM repeat units follow at residues 169–208, 211–250, and 751–790; these read EAGAEKIFQNNGVALLLQLLDTKKPELVLAAVRTLSGMCS, QARATVILHAVRIDRICSLMAVENEEMSLAVCNLLQAIID, and DKLRQKIFKERALPDIENYMFENHDQLRQAATECMCNMVL.

In terms of assembly, interacts with HSP90 in an ATP-independent manner. Interacts with UBE4B; the interaction may target UNC45B for proteasomal degradation. In terms of tissue distribution, expressed in eye lens tissues. Expressed in muscle (at protein level).

The protein resides in the cytoplasm. It localises to the myofibril. The protein localises to the sarcomere. Its subcellular location is the z line. It is found in the a band. The protein resides in the perinuclear region. It localises to the cytosol. Functionally, acts as a co-chaperone for HSP90 and is required for proper folding of the myosin motor domain. Plays a role in sarcomere formation during muscle cell development. Is necessary for normal early lens development. The chain is Protein unc-45 homolog B from Homo sapiens (Human).